The sequence spans 681 residues: Sterile alpha motif domain-containing protein 11 (681 aa).

Disordered regions lie at residues 41–77 (RNLK…EDGP), 212–234 (YHLG…HLPS), 251–307 (GPSG…APHV), and 407–498 (LLAL…GAEG). A Glycyl lysine isopeptide (Lys-Gly) (interchain with G-Cter in SUMO2) cross-link involves residue K72. Positions 219 to 234 (HGEDPPWHDPPHHLPS) are enriched in basic and acidic residues. The segment covering 412 to 423 (PQGPPGSGPPTP) has biased composition (pro residues). A Phosphothreonine modification is found at T485. Positions 543 to 608 (WTVDDVCSFV…AQVARRLGRV (66 aa)) constitute an SAM domain. The segment at 625-681 (LRAPERELGTGEQPLSPTTATSPYGGGHALAGQTSPKQENGTLALLPGAPDPSQPLC) is disordered. 2 stretches are compositionally biased toward polar residues: residues 637 to 646 (QPLSPTTATS) and 656 to 665 (GQTSPKQENG). The residue at position 640 (S640) is a Phosphoserine.

In terms of assembly, self-associates. Component of a Polycomb group (PcG) multiprotein PRC1-like complex. Interacts with SAMD7 and PHC2. Expressed in the outer and inner nuclear layers, ganglion cell layer and rod photoreceptors of the retina (at protein level). Widely expressed, showing the highest expression in kidney, prostate and retina.

It is found in the nucleus. Its function is as follows. Component of a Polycomb group (PcG) multiprotein PRC1-like complex, essential for establishing rod photoreceptor cell identity and function by silencing nonrod gene expression in developing rod photoreceptor cells. The chain is Sterile alpha motif domain-containing protein 11 (SAMD11) from Homo sapiens (Human).